A 247-amino-acid polypeptide reads, in one-letter code: Protein McbF (247 aa).

Residues 6-234 form the ABC transporter domain; it reads LEINSLSFSY…NNETTQKRHL (229 aa). Position 40 to 47 (40 to 47) interacts with ATP; it reads GENPAGKT.

The protein belongs to the ABC transporter superfamily.

Together with two further proteins McbE and McbG this protein causes immunity to the peptide antibiotic microcin B17, which inhibits DNA replication in enterobacteriaceae. Immunity is determined by two different mechanisms. McbE is involved in the production of extracellular MccB17 and, in a complex with mcbf it also serves as 'pump' for the export of active MccB17 from the cytoplasm to the periplasmic space. The protein is Protein McbF (mcbF) of Escherichia coli.